We begin with the raw amino-acid sequence, 536 residues long: Chaperonin GroEL (536 aa).

ATP is bound by residues 30 to 33 (TLGP), 86 to 90 (DGTTT), glycine 414, and aspartate 494.

It belongs to the chaperonin (HSP60) family. As to quaternary structure, forms a cylinder of 14 subunits composed of two heptameric rings stacked back-to-back. Interacts with the co-chaperonin GroES.

It is found in the cytoplasm. The catalysed reaction is ATP + H2O + a folded polypeptide = ADP + phosphate + an unfolded polypeptide.. Functionally, together with its co-chaperonin GroES, plays an essential role in assisting protein folding. The GroEL-GroES system forms a nano-cage that allows encapsulation of the non-native substrate proteins and provides a physical environment optimized to promote and accelerate protein folding. The polypeptide is Chaperonin GroEL (Methanosarcina barkeri (strain Fusaro / DSM 804)).